Reading from the N-terminus, the 357-residue chain is DNA replication and repair protein RecF (357 aa).

31–38 (GQNGAGKT) provides a ligand contact to ATP.

The protein belongs to the RecF family.

The protein resides in the cytoplasm. The RecF protein is involved in DNA metabolism; it is required for DNA replication and normal SOS inducibility. RecF binds preferentially to single-stranded, linear DNA. It also seems to bind ATP. The chain is DNA replication and repair protein RecF from Coxiella burnetii (strain CbuG_Q212) (Coxiella burnetii (strain Q212)).